Reading from the N-terminus, the 115-residue chain is Large ribosomal subunit protein uL23 (115 aa).

Belongs to the universal ribosomal protein uL23 family. In terms of assembly, part of the 50S ribosomal subunit. Contacts protein L29, and trigger factor when it is bound to the ribosome.

Functionally, one of the early assembly proteins it binds 23S rRNA. One of the proteins that surrounds the polypeptide exit tunnel on the outside of the ribosome. Forms the main docking site for trigger factor binding to the ribosome. This is Large ribosomal subunit protein uL23 from Granulibacter bethesdensis (strain ATCC BAA-1260 / CGDNIH1).